The primary structure comprises 441 residues: ATP-dependent protease ATPase subunit HslU (441 aa).

ATP-binding positions include I18, 60 to 65 (GVGKTE), D254, E319, and R391.

Belongs to the ClpX chaperone family. HslU subfamily. A double ring-shaped homohexamer of HslV is capped on each side by a ring-shaped HslU homohexamer. The assembly of the HslU/HslV complex is dependent on binding of ATP.

It localises to the cytoplasm. In terms of biological role, ATPase subunit of a proteasome-like degradation complex; this subunit has chaperone activity. The binding of ATP and its subsequent hydrolysis by HslU are essential for unfolding of protein substrates subsequently hydrolyzed by HslV. HslU recognizes the N-terminal part of its protein substrates and unfolds these before they are guided to HslV for hydrolysis. This Shewanella piezotolerans (strain WP3 / JCM 13877) protein is ATP-dependent protease ATPase subunit HslU.